The sequence spans 200 residues: Probable molybdenum cofactor guanylyltransferase (200 aa).

GTP contacts are provided by residues Leu9–Gly11, Lys21, Asp69, and Asp100. Residue Asp100 participates in Mg(2+) binding.

Belongs to the MobA family. Mg(2+) is required as a cofactor.

The protein localises to the cytoplasm. The enzyme catalyses Mo-molybdopterin + GTP + H(+) = Mo-molybdopterin guanine dinucleotide + diphosphate. Transfers a GMP moiety from GTP to Mo-molybdopterin (Mo-MPT) cofactor (Moco or molybdenum cofactor) to form Mo-molybdopterin guanine dinucleotide (Mo-MGD) cofactor. The protein is Probable molybdenum cofactor guanylyltransferase of Bacillus mycoides (strain KBAB4) (Bacillus weihenstephanensis).